Here is a 60-residue protein sequence, read N- to C-terminus: Homeobox protein CHOX-CAD2 (60 aa).

The segment at residues K1 to I60 is a DNA-binding region (homeobox).

The protein belongs to the Caudal homeobox family.

It is found in the nucleus. In Gallus gallus (Chicken), this protein is Homeobox protein CHOX-CAD2 (CHOX-CAD2).